Consider the following 245-residue polypeptide: 5-oxoprolinase subunit A (245 aa).

Belongs to the LamB/PxpA family. In terms of assembly, forms a complex composed of PxpA, PxpB and PxpC.

The catalysed reaction is 5-oxo-L-proline + ATP + 2 H2O = L-glutamate + ADP + phosphate + H(+). Its function is as follows. Catalyzes the cleavage of 5-oxoproline to form L-glutamate coupled to the hydrolysis of ATP to ADP and inorganic phosphate. The chain is 5-oxoprolinase subunit A from Haemophilus influenzae (strain PittGG).